The chain runs to 63 residues: MSGRSTFGRFGPPSSEPWERKPGDDEGGPKRPKVERPDTNDLLKRMRRVDPNQSRRYRQRTGE.

The disordered stretch occupies residues M1 to E63. Residues P17 to D50 show a composition bias toward basic and acidic residues. Residue E63 forms an Isoglutamyl lysine isopeptide (Glu-Lys) (interchain with K-? in acceptor proteins) linkage.

It belongs to the ubiquitin-like protein UBact family.

Its function is as follows. May function as a protein modifier covalently attached to lysine residues of substrate proteins. This may serve to target the modified proteins for degradation by proteasomes. In Handelsmanbacteria sp. (strain RIFCSPLOWO2_12_FULL_64_10), this protein is Prokaryotic ubiquitin-like protein UBact.